Consider the following 222-residue polypeptide: PKHD-type hydroxylase P9301_13621 (222 aa).

The region spanning 81-175 (KIHGIMFTKS…RLVCVGWIES (95 aa)) is the Fe2OG dioxygenase domain. Residues His99, Asp101, and His156 each contribute to the Fe cation site. Residue Arg166 coordinates 2-oxoglutarate.

Fe(2+) serves as cofactor. The cofactor is L-ascorbate.

This chain is PKHD-type hydroxylase P9301_13621, found in Prochlorococcus marinus (strain MIT 9301).